A 197-amino-acid polypeptide reads, in one-letter code: 3-isopropylmalate dehydratase small subunit (197 aa).

This sequence belongs to the LeuD family. LeuD type 1 subfamily. Heterodimer of LeuC and LeuD.

The catalysed reaction is (2R,3S)-3-isopropylmalate = (2S)-2-isopropylmalate. Its pathway is amino-acid biosynthesis; L-leucine biosynthesis; L-leucine from 3-methyl-2-oxobutanoate: step 2/4. In terms of biological role, catalyzes the isomerization between 2-isopropylmalate and 3-isopropylmalate, via the formation of 2-isopropylmaleate. This chain is 3-isopropylmalate dehydratase small subunit, found in Acidothermus cellulolyticus (strain ATCC 43068 / DSM 8971 / 11B).